We begin with the raw amino-acid sequence, 147 residues long: MTQAFWQTKTLDEMSDDEWESLCDGCGQCCLHKLMDDDTDEIYFTNVACNQLNIKTCQCSNYEDRFRYEPDCIKLTRYNLPTFEWLPMTCAYRLLAEGKPLADWHPLIAGNKAKMHQGNISVRYIAVPEVEVEDWEDHILNRPKGRG.

The protein belongs to the UPF0260 family.

This chain is UPF0260 protein PMI1174, found in Proteus mirabilis (strain HI4320).